A 283-amino-acid polypeptide reads, in one-letter code: Flagellar filament 35 kDa core protein (283 aa).

This sequence belongs to the bacterial flagellin family. As to quaternary structure, the flagellum consists of two outer layers around a core that contains several antigenically related polypeptides.

The protein resides in the periplasmic flagellum. It localises to the periplasm. In terms of biological role, component of the core of the flagella. This Leptospira interrogans serogroup Icterohaemorrhagiae serovar copenhageni (strain Fiocruz L1-130) protein is Flagellar filament 35 kDa core protein (flaB).